We begin with the raw amino-acid sequence, 264 residues long: Zinc import ATP-binding protein ZnuC (264 aa).

Residues 11–226 (IELKGVNVTF…PVFIRFFGNQ (216 aa)) form the ABC transporter domain. 43–50 (GPNGGGKS) contacts ATP.

Belongs to the ABC transporter superfamily. Zinc importer (TC 3.A.1.15.5) family. The complex is composed of two ATP-binding proteins (ZnuC), two transmembrane proteins (ZnuB) and a solute-binding protein (ZnuA).

The protein resides in the cell inner membrane. The enzyme catalyses Zn(2+)(out) + ATP(in) + H2O(in) = Zn(2+)(in) + ADP(in) + phosphate(in) + H(+)(in). Functionally, part of the ABC transporter complex ZnuABC involved in zinc import. Responsible for energy coupling to the transport system. The polypeptide is Zinc import ATP-binding protein ZnuC (Histophilus somni (strain 129Pt) (Haemophilus somnus)).